A 732-amino-acid chain; its full sequence is Polyadenylate-binding protein, cytoplasmic and nuclear (732 aa).

The segment covering 1–19 (MSAETSTTPAPAENTNGTP) has biased composition (polar residues). The interval 1–26 (MSAETSTTPAPAENTNGTPDNAPAPE) is disordered. 4 consecutive RRM domains span residues 42–120 (ASLY…WSQR), 130–207 (GNVF…HHIS), 223–300 (TNIY…RAQK), and 326–454 (VNLY…LAQR). 2 disordered regions span residues 357 to 413 (VMRD…KKPL) and 706 to 732 (MKNK…ENKA). A compositionally biased stretch (basic and acidic residues) spans 371 to 412 (SETKESANKENEKAAEGEKEPAAEEKEKEEKKEAEQKPEKKP). The 78-residue stretch at 630–707 (VGVLTAQALS…ALSVYDEYMK (78 aa)) folds into the PABC domain.

This sequence belongs to the polyadenylate-binding protein type-1 family.

It localises to the cytoplasm. The protein localises to the nucleus. Binds the poly(A) tail of mRNA. Appears to be an important mediator of the multiple roles of the poly(A) tail in mRNA biogenesis, stability and translation. In the nucleus, involved in both mRNA cleavage and polyadenylation. Is also required for efficient mRNA export to the cytoplasm. Acts in concert with a poly(A)-specific nuclease (PAN) to affect poly(A) tail shortening, which may occur concomitantly with either nucleocytoplasmic mRNA transport or translational initiation. In the cytoplasm, stimulates translation initiation and regulates mRNA decay through translation termination-coupled poly(A) shortening, probably mediated by PAN. This Emericella nidulans (strain FGSC A4 / ATCC 38163 / CBS 112.46 / NRRL 194 / M139) (Aspergillus nidulans) protein is Polyadenylate-binding protein, cytoplasmic and nuclear (pab1).